Here is a 704-residue protein sequence, read N- to C-terminus: Polyribonucleotide nucleotidyltransferase (704 aa).

Aspartate 485 and aspartate 491 together coordinate Mg(2+). The KH domain occupies 552–611; sequence PKILTMTINPDKIRDVIGPSGKMINKIIEDTGVKIDIEQDGTIYISSADTNMNNKAREII. Residues 621 to 689 form the S1 motif domain; sequence GQMYLGTVKR…NQGRVNLSRK (69 aa).

The protein belongs to the polyribonucleotide nucleotidyltransferase family. The cofactor is Mg(2+).

It is found in the cytoplasm. The enzyme catalyses RNA(n+1) + phosphate = RNA(n) + a ribonucleoside 5'-diphosphate. Its function is as follows. Involved in mRNA degradation. Catalyzes the phosphorolysis of single-stranded polyribonucleotides processively in the 3'- to 5'-direction. This Halalkalibacterium halodurans (strain ATCC BAA-125 / DSM 18197 / FERM 7344 / JCM 9153 / C-125) (Bacillus halodurans) protein is Polyribonucleotide nucleotidyltransferase.